The chain runs to 447 residues: Methylenetetrahydrofolate--tRNA-(uracil-5-)-methyltransferase TrmFO (447 aa).

9-14 (GGGLAG) provides a ligand contact to FAD.

It belongs to the MnmG family. TrmFO subfamily. FAD is required as a cofactor.

Its subcellular location is the cytoplasm. It carries out the reaction uridine(54) in tRNA + (6R)-5,10-methylene-5,6,7,8-tetrahydrofolate + NADH + H(+) = 5-methyluridine(54) in tRNA + (6S)-5,6,7,8-tetrahydrofolate + NAD(+). It catalyses the reaction uridine(54) in tRNA + (6R)-5,10-methylene-5,6,7,8-tetrahydrofolate + NADPH + H(+) = 5-methyluridine(54) in tRNA + (6S)-5,6,7,8-tetrahydrofolate + NADP(+). Its function is as follows. Catalyzes the folate-dependent formation of 5-methyl-uridine at position 54 (M-5-U54) in all tRNAs. The polypeptide is Methylenetetrahydrofolate--tRNA-(uracil-5-)-methyltransferase TrmFO (Paramagnetospirillum magneticum (strain ATCC 700264 / AMB-1) (Magnetospirillum magneticum)).